A 410-amino-acid polypeptide reads, in one-letter code: Serine/threonine transporter SstT (410 aa).

The next 10 helical transmembrane spans lie at 15–35 (GSLVTQIMVGLVAGIALAWLS), 49–69 (FVNALKAVAPLLVLVLVISSI), 82–102 (PIVMLYLLSTFFAAVVAVVAS), 118–138 (IVPPSGILEVLHGLLMSMVTN), 142–162 (AVMKANYIGILVWAIGLGFAF), 190–210 (FAPVGIFGLVASILASTGFDA), 217–237 (LLGLLLGCMLLMALVFNPLLV), 299–319 (MAGASITITVLTLAAVHTLGI), 331–351 (LVASVCACGASGVAGGSLLLI), and 358–378 (FGIPNEIAMQVVAVGFIIGVL).

The protein belongs to the dicarboxylate/amino acid:cation symporter (DAACS) (TC 2.A.23) family.

The protein localises to the cell inner membrane. The catalysed reaction is L-serine(in) + Na(+)(in) = L-serine(out) + Na(+)(out). The enzyme catalyses L-threonine(in) + Na(+)(in) = L-threonine(out) + Na(+)(out). Involved in the import of serine and threonine into the cell, with the concomitant import of sodium (symport system). In Erwinia tasmaniensis (strain DSM 17950 / CFBP 7177 / CIP 109463 / NCPPB 4357 / Et1/99), this protein is Serine/threonine transporter SstT.